Consider the following 98-residue polypeptide: NADH-ubiquinone oxidoreductase chain 4L (98 aa).

A run of 3 helical transmembrane segments spans residues 1 to 21, 29 to 49, and 58 to 78; these read MPII…GMLI, SLLC…LMAL, and IVPV…LALL.

This sequence belongs to the complex I subunit 4L family. In terms of assembly, core subunit of respiratory chain NADH dehydrogenase (Complex I) which is composed of 45 different subunits.

The protein resides in the mitochondrion inner membrane. The catalysed reaction is a ubiquinone + NADH + 5 H(+)(in) = a ubiquinol + NAD(+) + 4 H(+)(out). In terms of biological role, core subunit of the mitochondrial membrane respiratory chain NADH dehydrogenase (Complex I) which catalyzes electron transfer from NADH through the respiratory chain, using ubiquinone as an electron acceptor. Part of the enzyme membrane arm which is embedded in the lipid bilayer and involved in proton translocation. The chain is NADH-ubiquinone oxidoreductase chain 4L (MT-ND4L) from Semnopithecus entellus (Northern plains gray langur).